Consider the following 166-residue polypeptide: C-signal (166 aa).

Post-translationally, the mature C-signal (p17) is derived from the precursor sequence (p25) by proteolytic cleavage. The subtilisin-like protease PopC is directly responsible for cleavage of p25 to p17. The cleavage site is probably located between amino acid residues 60 and 68 in p25.

It is found in the secreted. It localises to the cell outer membrane. With respect to regulation, synthesized as a precursor protein (p25), which is cleaved after secretion to generate the mature active C-signal (p17). The p25 precursor purified from M.xanthus cells does not display C-signal activity. Its function is as follows. Cell-cell signaling protein required for fruiting body formation, a multicellular developmental program that is induced in response to starvation. Necessary for rippling, cellular aggregation, spore differentiation and for gene expression that is initiated after 6 hours of starvation. In starving cells, the C-signal directly induces aggregation and sporulation, which are induced at distinct threshold levels of C-signaling. Contact with C-signaling induces cells to glide with high speed and low stop and reversal frequencies toward aggregation centers. The C-signal acts as a morphogen and induces distinct events at distinct threshold levels. A regulated increase in the level of C-signaling during development ensures the correct temporal order of aggregation and sporulation. In Myxococcus xanthus, this protein is C-signal.